We begin with the raw amino-acid sequence, 185 residues long: Disulfide bond formation protein B (185 aa).

Over 1–25 the chain is Cytoplasmic; it reads MLLFFVILGIFVLTILKAISKQRWS. A helical membrane pass occupies residues 26–42; that stretch reads WLLLAASALSLELSALY. Residues 43–60 lie on the Periplasmic side of the membrane; the sequence is FQHVMQLEPCVMCVYERL. Cysteine 52 and cysteine 55 form a disulfide bridge. A helical membrane pass occupies residues 61–76; that stretch reads AMLGILLAGLIGASSP. The Cytoplasmic segment spans residues 77-83; sequence NNVFIRL. A helical transmembrane segment spans residues 84-101; it reads SAFLLWGISAVWGILLAI. Residues 102–156 are Periplasmic-facing; sequence KHTDYQLHPSPFFTCDFFPNFPAWAPLHEWLPWLFNPTGDCSDIVWQFLGYSMPQ. Cysteine 116 and cysteine 142 form a disulfide bridge. The helical transmembrane segment at 157–175 threads the bilayer; that stretch reads WLIVSFSLYTLLFIIFAIS. Over 176 to 185 the chain is Cytoplasmic; that stretch reads AVLKTKKQLF.

This sequence belongs to the DsbB family.

Its subcellular location is the cell inner membrane. Required for disulfide bond formation in some periplasmic proteins. Acts by oxidizing the DsbA protein. The protein is Disulfide bond formation protein B of Psychromonas ingrahamii (strain DSM 17664 / CCUG 51855 / 37).